Consider the following 63-residue polypeptide: Large ribosomal subunit protein bL28 (63 aa).

It belongs to the bacterial ribosomal protein bL28 family.

This chain is Large ribosomal subunit protein bL28, found in Symbiobacterium thermophilum (strain DSM 24528 / JCM 14929 / IAM 14863 / T).